Consider the following 378-residue polypeptide: Plant intracellular Ras-group-related LRR protein 8 (378 aa).

The Ubiquitin-like domain maps to proline 10 to histidine 86. Positions leucine 85 to asparagine 120 are disordered. Positions threonine 93–alanine 106 are enriched in polar residues. 9 LRR repeats span residues tryptophan 129 to cysteine 152, glycine 153 to leucine 176, serine 178 to cysteine 201, valine 202 to isoleucine 225, threonine 226 to histidine 250, glutamate 252 to cysteine 271, glutamate 272 to asparagine 293, leucine 294 to lysine 317, and serine 319 to glutamate 344.

Belongs to the SHOC2 family. Widely expressed except in panicles.

Functionally, leucine-rich repeat protein that likely mediates protein interactions, possibly in the context of signal transduction. This is Plant intracellular Ras-group-related LRR protein 8 (IRL8) from Oryza sativa subsp. japonica (Rice).